A 234-amino-acid polypeptide reads, in one-letter code: Phosphoribosylaminoimidazole-succinocarboxamide synthase (234 aa).

Belongs to the SAICAR synthetase family.

The catalysed reaction is 5-amino-1-(5-phospho-D-ribosyl)imidazole-4-carboxylate + L-aspartate + ATP = (2S)-2-[5-amino-1-(5-phospho-beta-D-ribosyl)imidazole-4-carboxamido]succinate + ADP + phosphate + 2 H(+). It functions in the pathway purine metabolism; IMP biosynthesis via de novo pathway; 5-amino-1-(5-phospho-D-ribosyl)imidazole-4-carboxamide from 5-amino-1-(5-phospho-D-ribosyl)imidazole-4-carboxylate: step 1/2. This chain is Phosphoribosylaminoimidazole-succinocarboxamide synthase (purC), found in Pyrococcus abyssi (strain GE5 / Orsay).